An 882-amino-acid polypeptide reads, in one-letter code: DNA mismatch repair protein MutS (882 aa).

Residue 629–636 participates in ATP binding; it reads GPNMGGKS.

The protein belongs to the DNA mismatch repair MutS family.

Its function is as follows. This protein is involved in the repair of mismatches in DNA. It is possible that it carries out the mismatch recognition step. This protein has a weak ATPase activity. The chain is DNA mismatch repair protein MutS from Ralstonia nicotianae (strain ATCC BAA-1114 / GMI1000) (Ralstonia solanacearum).